The sequence spans 1487 residues: Adhesion G protein-coupled receptor L2 (1487 aa).

A signal peptide spans 1-25; that stretch reads MVSSGCRMRSLWFIIIISFSPSTEG. Topologically, residues 26–855 are extracellular; sequence FSRAALPFGL…VHHLLLTVIT (830 aa). Residues 41–130 enclose the SUEL-type lectin domain; that stretch reads SCEGYSIDLR…KYLEVQYECV (90 aa). Residue Asn99 is glycosylated (N-linked (GlcNAc...) asparagine). Residues 139 to 398 enclose the Olfactomedin-like domain; the sequence is VCPGTLKAIV…ILRYSLEFGP (260 aa). Positions 423–439 are enriched in polar residues; sequence STTSSASQRGPVSSTAA. Residues 423–461 form a disordered region; it reads STTSSASQRGPVSSTAAGPQDGSRGTKPPPAVSTTKIPP. N-linked (GlcNAc...) asparagine glycans are attached at residues Asn524 and Asn735. The region spanning 663–841 is the GAIN-B domain; it reads TRVSMPTENI…AILMAHREIA (179 aa). 2 disulfide bridges follow: Cys792-Cys823 and Cys811-Cys825. Positions 792 to 841 are GPS; it reads CSFWNYSERTMMGYWSTQGCKLVDTNKTRTTCACSHLTNFAILMAHREIA. A stachel region spans residues 829-841; it reads TNFAILMAHREIA. Residues 856–876 form a helical membrane-spanning segment; that stretch reads WVGIVVSLVCLAICIFTFCFF. The Cytoplasmic portion of the chain corresponds to 877 to 884; that stretch reads RGLQSDRN. Residues 885-905 traverse the membrane as a helical segment; that stretch reads TIHKNLCINLFIAEFIFLIGI. The Extracellular segment spans residues 906–911; that stretch reads DKTKYT. A helical membrane pass occupies residues 912-932; it reads IACPVFAGLLHFFFLAAFSWM. The Cytoplasmic segment spans residues 933–955; the sequence is CLEGVQLYLMLVEVFESEYSRKK. The helical transmembrane segment at 956-976 threads the bilayer; the sequence is YYYVAGYLFPATVVGVSAAID. Residues 977-994 lie on the Extracellular side of the membrane; the sequence is YKSYGTVQACWLHVDNYF. Residues 995–1015 traverse the membrane as a helical segment; the sequence is IWSFIGPVTFIILLNIIFLVI. At 1016–1064 the chain is on the cytoplasmic side; that stretch reads TLCKMVKHSNTLKPDSSRLENINNYRVCDGYYNTDLPGYEDNKPFIKSW. The chain crosses the membrane as a helical span at residues 1065 to 1085; it reads VLGAFALLCLLGLTWSFGLLF. The Extracellular portion of the chain corresponds to 1086–1090; it reads VNEET. Residues 1091 to 1111 form a helical membrane-spanning segment; it reads VVMAYLFTAFNAFQGLFIFIF. Residues 1386-1430 are disordered; it reads EADDHLQSPNRDSLYTSMPNLRDSPYPESSPDMAEDLSPSRRSEN. Polar residues predominate over residues 1392–1404; that stretch reads QSPNRDSLYTSMP. Phosphoserine occurs at positions 1402, 1437, and 1458.

This sequence belongs to the G-protein coupled receptor 2 family. Adhesion G-protein coupled receptor (ADGR) subfamily. As to quaternary structure, heterodimer of 2 chains generated by proteolytic processing; the large extracellular N-terminal fragment and the membrane-bound C-terminal fragment predominantly remain associated and non-covalently linked. In terms of processing, autoproteolytically processed at the GPS region of the GAIN-B domain; this cleavage modulates receptor activity. In terms of tissue distribution, ubiquitously expressed. In neurons, specifically localizes to dendritic domains of CA1 pyramidal neurons in the S. lacunosummoleculare.

It localises to the postsynaptic cell membrane. With respect to regulation, forms a heterodimer of 2 chains generated by proteolytic processing that remain associated through non-covalent interactions mediated by the GAIN-B domain. In the inactivated receptor, the Stachel sequence (also named stalk) is embedded in the GAIN-B domain, where it adopts a beta-strand conformation. On activation, the Stachel moves into the 7 transmembrane region and adopts a twisted hook-shaped configuration that forms contacts within the receptor, leading to coupling of a G-alpha protein, which activates signaling. The cleaved GAIN-B and N-terminal domains can then dissociate from the rest of the receptor. In terms of biological role, orphan adhesion G-protein coupled receptor (aGPCR), which mediates synapse specificity. Ligand binding causes a conformation change that triggers signaling via guanine nucleotide-binding proteins (G proteins) and modulates the activity of downstream effectors. Following G-protein coupled receptor activation, associates with cell adhesion molecules that are expressed at the surface of adjacent cells to direct synapse specificity. Specifically mediates the establishment of perforant-path synapses on CA1-region pyramidal neurons in the hippocampus. Localizes to postsynaptic spines in excitatory synapses in the S.lacunosum-moleculare and interacts with presynaptic cell adhesion molecules, such as teneurins, promoting synapse formation. This Mus musculus (Mouse) protein is Adhesion G protein-coupled receptor L2.